We begin with the raw amino-acid sequence, 316 residues long: 4-hydroxy-3-methylbut-2-enyl diphosphate reductase (316 aa).

C12 contributes to the [4Fe-4S] cluster binding site. Positions 41 and 74 each coordinate (2E)-4-hydroxy-3-methylbut-2-enyl diphosphate. Dimethylallyl diphosphate contacts are provided by H41 and H74. 2 residues coordinate isopentenyl diphosphate: H41 and H74. Residue C96 coordinates [4Fe-4S] cluster. H124 is a binding site for (2E)-4-hydroxy-3-methylbut-2-enyl diphosphate. H124 is a dimethylallyl diphosphate binding site. H124 provides a ligand contact to isopentenyl diphosphate. The active-site Proton donor is E126. T167 is a binding site for (2E)-4-hydroxy-3-methylbut-2-enyl diphosphate. C197 lines the [4Fe-4S] cluster pocket. (2E)-4-hydroxy-3-methylbut-2-enyl diphosphate is bound by residues S225, S226, N227, and S269. Dimethylallyl diphosphate contacts are provided by S225, S226, N227, and S269. Positions 225, 226, 227, and 269 each coordinate isopentenyl diphosphate.

The protein belongs to the IspH family. In terms of assembly, homodimer. Requires [4Fe-4S] cluster as cofactor.

It carries out the reaction isopentenyl diphosphate + 2 oxidized [2Fe-2S]-[ferredoxin] + H2O = (2E)-4-hydroxy-3-methylbut-2-enyl diphosphate + 2 reduced [2Fe-2S]-[ferredoxin] + 2 H(+). The enzyme catalyses dimethylallyl diphosphate + 2 oxidized [2Fe-2S]-[ferredoxin] + H2O = (2E)-4-hydroxy-3-methylbut-2-enyl diphosphate + 2 reduced [2Fe-2S]-[ferredoxin] + 2 H(+). It functions in the pathway isoprenoid biosynthesis; dimethylallyl diphosphate biosynthesis; dimethylallyl diphosphate from (2E)-4-hydroxy-3-methylbutenyl diphosphate: step 1/1. The protein operates within isoprenoid biosynthesis; isopentenyl diphosphate biosynthesis via DXP pathway; isopentenyl diphosphate from 1-deoxy-D-xylulose 5-phosphate: step 6/6. In terms of biological role, catalyzes the conversion of 1-hydroxy-2-methyl-2-(E)-butenyl 4-diphosphate (HMBPP) into a mixture of isopentenyl diphosphate (IPP) and dimethylallyl diphosphate (DMAPP). Acts in the terminal step of the DOXP/MEP pathway for isoprenoid precursor biosynthesis. This Escherichia coli O6:H1 (strain CFT073 / ATCC 700928 / UPEC) protein is 4-hydroxy-3-methylbut-2-enyl diphosphate reductase.